We begin with the raw amino-acid sequence, 436 residues long: UPF0229 protein mll9637 (436 aa).

The interval 54–103 is disordered; the sequence is IPRKGTGEPTFGDDKESGRRQHILPGNRTFSSGDLIPKPGGGGGYGSAAG.

This sequence belongs to the UPF0229 family.

The protein is UPF0229 protein mll9637 of Mesorhizobium japonicum (strain LMG 29417 / CECT 9101 / MAFF 303099) (Mesorhizobium loti (strain MAFF 303099)).